The sequence spans 89 residues: Putative septation protein SpoVG (89 aa).

The protein belongs to the SpoVG family.

Its function is as follows. Could be involved in septation. This is Putative septation protein SpoVG from Heliobacterium modesticaldum (strain ATCC 51547 / Ice1).